The primary structure comprises 193 residues: CASP-like protein 2U1 (193 aa).

Residues 1 to 18 (MAMALALGGGQDAERKVK) lie on the Cytoplasmic side of the membrane. Residues 19-39 (VAEVALRALLCGLGALAAALV) traverse the membrane as a helical segment. Over 40 to 61 (ATDTQTRTFFSLQKKASYTDMK) the chain is Extracellular. Residues 62 to 82 (AMVFLVDAAAVAAGYSLLQLA) traverse the membrane as a helical segment. The Cytoplasmic portion of the chain corresponds to 83 to 113 (ARCCGGGAMSSGRGDGGGRGRALSWCVFSCD). Residues 114-134 (QALAYVLLAAVAAALQASVVA) form a helical membrane-spanning segment. Residues 135-156 (KRGQPELQWMGICALYGAFCRQ) are Extracellular-facing. The chain crosses the membrane as a helical span at residues 157–177 (AGAGLATAVVAGLAAVLLAFL). Over 178-193 (SAFNLFRLYGSGGTKS) the chain is Cytoplasmic.

Belongs to the Casparian strip membrane proteins (CASP) family. Homodimer and heterodimers.

Its subcellular location is the cell membrane. This Sorghum bicolor (Sorghum) protein is CASP-like protein 2U1.